Reading from the N-terminus, the 259-residue chain is Ribonuclease HII (259 aa).

Positions 70–258 (TLIVGIDEVG…VKSLVLGKKE (189 aa)) constitute an RNase H type-2 domain. 3 residues coordinate a divalent metal cation: aspartate 76, glutamate 77, and aspartate 168.

Belongs to the RNase HII family. Mn(2+) serves as cofactor. It depends on Mg(2+) as a cofactor.

The protein resides in the cytoplasm. It catalyses the reaction Endonucleolytic cleavage to 5'-phosphomonoester.. In terms of biological role, endonuclease that specifically degrades the RNA of RNA-DNA hybrids. The polypeptide is Ribonuclease HII (Streptococcus pneumoniae serotype 2 (strain D39 / NCTC 7466)).